Here is a 285-residue protein sequence, read N- to C-terminus: MFPYYPLKVTRNLQLLVWAAVLMALSFIFNIFSINVTSVLKVSFTRIPFALIGWMFGPVWGFTFGAIADTMDWLTRGYTWFWLFAIQKPMFCFLAGLVKGVYQVRQSSTNWKIDFWILQSILIGFFVLTLVLLLMYLTDGNFQAAGNQSFGRGFDVNVHILQGITMAAFISFFVGLEIFLGWKYTKVKKPKEMILNLYILMMALLMTLVVSLLIGTVASIEYLVFLSGKPSKNFVKYGSYFFLMPRVLVQALLMPLYLALFKPLIRIAENNLRNYLRVYNLSWKR.

This is an uncharacterized protein from Mycoplasma pneumoniae (strain ATCC 29342 / M129 / Subtype 1) (Mycoplasmoides pneumoniae).